The following is a 587-amino-acid chain: Integrator complex subunit 14 (587 aa).

Residues 3 to 113 (TLIALDASLS…NILQVVVFTD (111 aa)) enclose the VWFA domain. Disordered regions lie at residues 190–211 (KSSDAVEGNPNPNPNPSHKSEL) and 304–331 (REKSGSSRRSGNLSAAAKPPKLNLDTSN).

It belongs to the Integrator subunit 14 family. In terms of assembly, belongs to the multiprotein complex Integrator, at least composed of IntS1, IntS2, IntS3, IntS4, omd/IntS5, IntS6, defl/IntS7, IntS8, IntS9, IntS10, IntS11, IntS12, asun/IntS13, IntS14 and IntS15. The core complex associates with protein phosphatase 2A subunits mts/PP2A and Pp2A-29B, to form the Integrator-PP2A (INTAC) complex.

The protein resides in the nucleus. Its function is as follows. Component of the integrator complex, a multiprotein complex that terminates RNA polymerase II (Pol II) transcription in the promoter-proximal region of genes. The integrator complex provides a quality checkpoint during transcription elongation by driving premature transcription termination of transcripts that are unfavorably configured for transcriptional elongation: the complex terminates transcription by (1) catalyzing dephosphorylation of the C-terminal domain (CTD) of Pol II subunit Polr2A/Rbp1 and Spt5, and (2) degrading the exiting nascent RNA transcript via endonuclease activity. The integrator complex is also involved in the 3'-end processing of the U7 snRNA, and also the spliceosomal snRNAs U1, U2, U4 and U5. The chain is Integrator complex subunit 14 from Drosophila melanogaster (Fruit fly).